The primary structure comprises 299 residues: tRNA uridine(34) hydroxylase (299 aa).

Residues 132-226 (AGRPVVMLDT…YFEEVGGAHY (95 aa)) enclose the Rhodanese domain. The active-site Cysteine persulfide intermediate is the C186.

The protein belongs to the TrhO family.

The catalysed reaction is uridine(34) in tRNA + AH2 + O2 = 5-hydroxyuridine(34) in tRNA + A + H2O. In terms of biological role, catalyzes oxygen-dependent 5-hydroxyuridine (ho5U) modification at position 34 in tRNAs. In Burkholderia pseudomallei (strain 1106a), this protein is tRNA uridine(34) hydroxylase.